The following is a 321-amino-acid chain: MRLWLCWLGCYTLLLWALRRRMWAGPARYLRSPLSRSLYANMMGSHGPPAPGAGENHQWYVCNTEQLSESLQPIFVQSYLDQGTQIFLNNSIEKSGWLFIQLYHSFVSSIFSLFMSRTSINGLLGRGSMFVFSPEQFQRLLKINPEWKSHRLLDLGAGDGEVTKVMSPHFEEIYATELSETMIWQLQKKKYRVLGINEWQNTGFQYDVISCLNLLDRCDQPLTVLKDTRSVLEPTRGRVILALVLPFHPYVENVGGKWEKPSEVLEIKGHTWEEQVNSLPEVFGKAGFAIEAFTRLPYLCEGDMYNDYYVLDDAVFVLKPV.

Residues 1–24 (MRLWLCWLGCYTLLLWALRRRMWA) form the signal peptide. Residue N89 is glycosylated (N-linked (GlcNAc...) asparagine). The S-adenosyl-L-homocysteine site is built by E177, N213, and Y298.

The protein belongs to the METTL9 family.

It localises to the endoplasmic reticulum. Its subcellular location is the mitochondrion. It carries out the reaction L-histidyl-[protein] + S-adenosyl-L-methionine = N(pros)-methyl-L-histidyl-[protein] + S-adenosyl-L-homocysteine + H(+). In terms of biological role, protein-histidine N-methyltransferase that specifically catalyzes 1-methylhistidine (pros-methylhistidine) methylation of target proteins. Mediates methylation of proteins with a His-x-His (HxH) motif (where 'x' is preferably a small amino acid); 1-methylhistidine modification may affect the binding of zinc and other metals to its target proteins. In Gallus gallus (Chicken), this protein is Protein-L-histidine N-pros-methyltransferase.